The following is a 38-amino-acid chain: Photosystem II reaction center protein L (38 aa).

Residues 17–37 form a helical membrane-spanning segment; that stretch reads GLYWGLLLIFVLAVLFSSYFF.

The protein belongs to the PsbL family. In terms of assembly, PSII is composed of 1 copy each of membrane proteins PsbA, PsbB, PsbC, PsbD, PsbE, PsbF, PsbH, PsbI, PsbJ, PsbK, PsbL, PsbM, PsbT, PsbX, PsbY, PsbZ, Psb30/Ycf12, at least 3 peripheral proteins of the oxygen-evolving complex and a large number of cofactors. It forms dimeric complexes.

It localises to the plastid. It is found in the chloroplast thylakoid membrane. Its function is as follows. One of the components of the core complex of photosystem II (PSII). PSII is a light-driven water:plastoquinone oxidoreductase that uses light energy to abstract electrons from H(2)O, generating O(2) and a proton gradient subsequently used for ATP formation. It consists of a core antenna complex that captures photons, and an electron transfer chain that converts photonic excitation into a charge separation. This subunit is found at the monomer-monomer interface and is required for correct PSII assembly and/or dimerization. This is Photosystem II reaction center protein L from Staurastrum punctulatum (Green alga).